The following is a 169-amino-acid chain: uncharacterized protein (169 aa).

Its subcellular location is the mitochondrion. This is an uncharacterized protein from Marchantia polymorpha (Common liverwort).